Consider the following 204-residue polypeptide: Nascent polypeptide-associated complex subunit alpha (204 aa).

Basic and acidic residues predominate over residues 1–19 (MADPRVEELPDEEVPKANV). Disordered regions lie at residues 1–47 (MADP…IHSR) and 118–167 (QLAA…GLEA). A compositionally biased stretch (acidic residues) spans 22–32 (AGSDSESEAGE). In terms of domain architecture, NAC-A/B spans 46 to 111 (SRNEKKARKA…AKIEDLNSQA (66 aa)). Over residues 118–128 (QLAAAEAAAGE) the composition is skewed to low complexity. Over residues 129-151 (HAGHDHDHDHGKGKAPETEAKKE) the composition is skewed to basic and acidic residues. The segment covering 152-164 (EEEDDGEEVDETG) has biased composition (acidic residues). Residues 165-204 (LEAKDIELVMAQANVSRKKAVKALRENDNDIVNSIMALSI) form the UBA domain.

This sequence belongs to the NAC-alpha family. Part of the nascent polypeptide-associated complex (NAC), consisting of egd2 and egd1. NAC associates with ribosomes via egd1.

The protein localises to the cytoplasm. Its subcellular location is the nucleus. Functionally, component of the nascent polypeptide-associated complex (NAC), a dynamic component of the ribosomal exit tunnel, protecting the emerging polypeptides from interaction with other cytoplasmic proteins to ensure appropriate nascent protein targeting. The NAC complex also promotes mitochondrial protein import by enhancing productive ribosome interactions with the outer mitochondrial membrane and blocks the inappropriate interaction of ribosomes translating non-secretory nascent polypeptides with translocation sites in the membrane of the endoplasmic reticulum. Egd2 may also be involved in transcription regulation. In Aspergillus fumigatus (strain ATCC MYA-4609 / CBS 101355 / FGSC A1100 / Af293) (Neosartorya fumigata), this protein is Nascent polypeptide-associated complex subunit alpha (egd2).